The chain runs to 490 residues: Membrane-bound lytic murein transglycosylase F (490 aa).

A signal peptide spans 1 to 32 (MFALTAYRLRCAAWLLATGIFLLLAGCSEAKA). Residues 33–269 (PTALERVQKE…RLKDRYYGHV (237 aa)) are non-LT domain. The segment at 270 to 490 (DVLGYVGAYT…PEEDSGDEKL (221 aa)) is LT domain. Glu-316 is an active-site residue. Residues 467–490 (AESGLHLPGVNKTRPEEDSGDEKL) form a disordered region. Residues 479-490 (TRPEEDSGDEKL) are compositionally biased toward basic and acidic residues.

In the N-terminal section; belongs to the bacterial solute-binding protein 3 family. It in the C-terminal section; belongs to the transglycosylase Slt family.

It localises to the cell outer membrane. The enzyme catalyses Exolytic cleavage of the (1-&gt;4)-beta-glycosidic linkage between N-acetylmuramic acid (MurNAc) and N-acetylglucosamine (GlcNAc) residues in peptidoglycan, from either the reducing or the non-reducing ends of the peptidoglycan chains, with concomitant formation of a 1,6-anhydrobond in the MurNAc residue.. Functionally, murein-degrading enzyme that degrades murein glycan strands and insoluble, high-molecular weight murein sacculi, with the concomitant formation of a 1,6-anhydromuramoyl product. Lytic transglycosylases (LTs) play an integral role in the metabolism of the peptidoglycan (PG) sacculus. Their lytic action creates space within the PG sacculus to allow for its expansion as well as for the insertion of various structures such as secretion systems and flagella. The chain is Membrane-bound lytic murein transglycosylase F from Pseudomonas aeruginosa (strain ATCC 15692 / DSM 22644 / CIP 104116 / JCM 14847 / LMG 12228 / 1C / PRS 101 / PAO1).